Here is a 155-residue protein sequence, read N- to C-terminus: Deoxyuridine 5'-triphosphate nucleotidohydrolase (155 aa).

Substrate contacts are provided by residues 74–76 (RSG), N87, and 91–93 (TID).

This sequence belongs to the dUTPase family. Mg(2+) serves as cofactor.

It carries out the reaction dUTP + H2O = dUMP + diphosphate + H(+). The protein operates within pyrimidine metabolism; dUMP biosynthesis; dUMP from dCTP (dUTP route): step 2/2. Its function is as follows. This enzyme is involved in nucleotide metabolism: it produces dUMP, the immediate precursor of thymidine nucleotides and it decreases the intracellular concentration of dUTP so that uracil cannot be incorporated into DNA. This is Deoxyuridine 5'-triphosphate nucleotidohydrolase from Dinoroseobacter shibae (strain DSM 16493 / NCIMB 14021 / DFL 12).